The following is a 478-amino-acid chain: UDP-N-acetylmuramate--L-alanine ligase (478 aa).

126–132 (GTHGKTT) is an ATP binding site.

It belongs to the MurCDEF family.

It is found in the cytoplasm. It catalyses the reaction UDP-N-acetyl-alpha-D-muramate + L-alanine + ATP = UDP-N-acetyl-alpha-D-muramoyl-L-alanine + ADP + phosphate + H(+). Its pathway is cell wall biogenesis; peptidoglycan biosynthesis. Its function is as follows. Cell wall formation. This is UDP-N-acetylmuramate--L-alanine ligase from Mycolicibacterium vanbaalenii (strain DSM 7251 / JCM 13017 / BCRC 16820 / KCTC 9966 / NRRL B-24157 / PYR-1) (Mycobacterium vanbaalenii).